The sequence spans 344 residues: MHCPICHHRAHVVYCAHCINTSPSLLLKLKLDLILLKDENKELNGKVEQILNEAMNYDQLDIKRMEKKKDPLMNSLMKLDVLRMKKNNNLIRHRIEQLNERIYSKRNHISELKVEIDNYKCYKVGTGTDKLREQVEISDAKNKLAQVSKICESARDYKLNLLNNWFVIQKLQDNFQIPFAIAFQPLISLKNFRILPLAITNDSINIMWKYISFFSDILMIKLPYTNKICEQPMFEFSDSIQTVVQRLIKLIINILQICRHLKLVPSTPMDIPWLLDQYDVDGLFYNMVKRNKMKCRSVSLYWTFGMLYSMVLDNMNNPQRGHPARRTAPPPTVTGPHDRWYVVG.

Residues 3–18 (CPICHHRAHVVYCAHC) are cysteine repeats. Residues 25–156 (LLLKLKLDLI…VSKICESARD (132 aa)) adopt a coiled-coil conformation.

This sequence belongs to the ATG14 family. In terms of assembly, component of the autophagy-specific VPS34 PI3-kinase complex I composed of VPS15, VPS30, VPS34, ATG14 and ATG38. Interacts directly with ATG38.

The protein resides in the preautophagosomal structure membrane. It is found in the vacuole membrane. In terms of biological role, required for cytoplasm to vacuole transport (Cvt) and autophagy as a part of the autophagy-specific VPS34 PI3-kinase complex I. This complex is essential to recruit the ATG8-phosphatidylinositol conjugate and the ATG12-ATG5 conjugate to the pre-autophagosomal structure. ATG14 mediates the specific binding of the VPS34 PI3-kinase complex I to the preautophagosomal structure (PAS). This Saccharomyces cerevisiae (strain ATCC 204508 / S288c) (Baker's yeast) protein is Autophagy-related protein 14 (ATG14).